Consider the following 452-residue polypeptide: MQSSFKTVPFTPDFYSQSSYFFRGDSCLEEFHQPVNGFHHEEAIDLSPNVTIASANLHYTTFDTVMDCGGGGGGGLRERLEGGEEECLDTGQLVYQKGTRLVGGGVGEVNSSWCDSVSAMADNSQHTDTSTDIDTDDKTQLNGGHQGMLLATNCSDQSNVKSSDQRTLRRLAQNREAARKSRLRKKAYVQQLENSRIRLAQLEEELKRARQQGSLVERGVSADHTHLAAGNGVFSFELEYTRWKEEHQRMINDLRSGVNSQLGDNDLRVLVDAVMSHYDEIFRLKGIGTKVDVFHMLSGMWKTPAERFFMWLGGFRSSELLKILGNHVDPLTDQQLIGICNLQQSSQQAEDALSQGMEALQQSLLETLSSASMGPNSSANVADYMGHMAMAMGKLGTLENFLRQADLLRQQTLQQLHRILTTRQAARAFLVIHDYISRLRALSSLWLARPRD.

In terms of domain architecture, bZIP spans Asp-164–Leu-227. Positions Arg-166–Lys-186 are basic motif. The leucine-zipper stretch occupies residues Leu-192 to Leu-206. The DOG1 domain occupies Val-233 to Arg-449.

The protein belongs to the bZIP family. As to quaternary structure, interacts with GRXC7/ROXY1. Interacts with BOP1 and BOP2.

Its subcellular location is the nucleus. Functionally, transcriptional activator involved in the determination of floral organ number. Acts to determine floral organ patterning by establishing floral organ primordia in specific numbers and positions. Plays a role in regulating stem cell fate by directly controlling AG expression. Binds to the 5'-AAGAAT-3' cis-acting element found in AG promoter. Might represent a target for a post-translational modification by GRXC7/ROXY1. In Arabidopsis thaliana (Mouse-ear cress), this protein is Transcription factor PERIANTHIA (PAN).